The following is a 160-amino-acid chain: RNA-binding protein 3 (160 aa).

Residues 6–84 (GKLFVGGLNF…RQIRVDHAGK (79 aa)) enclose the RRM domain. The residue at position 47 (R47) is an Omega-N-methylarginine. Residues 81–116 (HAGKSARGSRGGAFGSYERGRGYPRGGGDQGYGSGR) are disordered. Over residues 103-114 (YPRGGGDQGYGS) the composition is skewed to gly residues. R105 carries the post-translational modification Asymmetric dimethylarginine; alternate. R105 is subject to Dimethylated arginine; alternate. Position 105 is an omega-N-methylarginine; alternate (R105). An omega-N-methylarginine mark is found at R120 and R134. Residues 135–160 (SRDYGGRSQGGYDRYSGGNYRDNYDN) are disordered. Residue S150 is modified to Phosphoserine. Y158 carries the post-translational modification Phosphotyrosine.

As to quaternary structure, interacts with RPL4. Associates with the 60S ribosomal subunits.

The protein localises to the nucleus. It is found in the cytoplasm. Its subcellular location is the cell projection. It localises to the dendrite. Its function is as follows. Cold-inducible mRNA binding protein that enhances global protein synthesis at both physiological and mild hypothermic temperatures. Reduces the relative abundance of microRNAs, when overexpressed. Enhances phosphorylation of translation initiation factors and active polysome formation. The polypeptide is RNA-binding protein 3 (Capra hircus (Goat)).